We begin with the raw amino-acid sequence, 197 residues long: Large ribosomal subunit protein uL18 (197 aa).

Belongs to the universal ribosomal protein uL18 family. As to quaternary structure, part of the 50S ribosomal subunit. Contacts the 5S and 23S rRNAs.

Functionally, this is one of the proteins that bind and probably mediate the attachment of the 5S RNA into the large ribosomal subunit, where it forms part of the central protuberance. This Sulfolobus acidocaldarius (strain ATCC 33909 / DSM 639 / JCM 8929 / NBRC 15157 / NCIMB 11770) protein is Large ribosomal subunit protein uL18.